The chain runs to 88 residues: Small ribosomal subunit protein uS17 (88 aa).

It belongs to the universal ribosomal protein uS17 family. Part of the 30S ribosomal subunit.

Its function is as follows. One of the primary rRNA binding proteins, it binds specifically to the 5'-end of 16S ribosomal RNA. The protein is Small ribosomal subunit protein uS17 of Mycoplasmopsis pulmonis (strain UAB CTIP) (Mycoplasma pulmonis).